The chain runs to 250 residues: 5-oxoprolinase subunit A (250 aa).

It belongs to the LamB/PxpA family. In terms of assembly, forms a complex composed of PxpA, PxpB and PxpC.

It carries out the reaction 5-oxo-L-proline + ATP + 2 H2O = L-glutamate + ADP + phosphate + H(+). Functionally, catalyzes the cleavage of 5-oxoproline to form L-glutamate coupled to the hydrolysis of ATP to ADP and inorganic phosphate. This Staphylococcus aureus (strain NCTC 8325 / PS 47) protein is 5-oxoprolinase subunit A.